Reading from the N-terminus, the 229-residue chain is 3-dehydroquinate dehydratase (229 aa).

3-dehydroquinate is bound by residues 33–35 (EWR) and Arg-65. His-121 (proton donor/acceptor) is an active-site residue. The Schiff-base intermediate with substrate role is filled by Lys-146. Positions 188, 207, and 211 each coordinate 3-dehydroquinate.

Belongs to the type-I 3-dehydroquinase family. In terms of assembly, homodimer.

The catalysed reaction is 3-dehydroquinate = 3-dehydroshikimate + H2O. The protein operates within metabolic intermediate biosynthesis; chorismate biosynthesis; chorismate from D-erythrose 4-phosphate and phosphoenolpyruvate: step 3/7. Functionally, involved in the third step of the chorismate pathway, which leads to the biosynthesis of aromatic amino acids. Catalyzes the cis-dehydration of 3-dehydroquinate (DHQ) and introduces the first double bond of the aromatic ring to yield 3-dehydroshikimate. The polypeptide is 3-dehydroquinate dehydratase (Lactococcus lactis subsp. cremoris (strain SK11)).